Reading from the N-terminus, the 711-residue chain is Polyribonucleotide nucleotidyltransferase (711 aa).

Mg(2+)-binding residues include D486 and D492. The KH domain occupies 553 to 612 (PRIHTIKINPDKIKDVIGKGGSVIRALTEETGTTIEIEDDGTVKIAATDGEKAKHAIRRI). Residues 622–690 (GRVYTGKVTR…RQGRIRLSIK (69 aa)) enclose the S1 motif domain. Positions 690-711 (KEATEQSQPAAAPEAPAAEQGE) are disordered. A compositionally biased stretch (low complexity) spans 694–711 (EQSQPAAAPEAPAAEQGE).

The protein belongs to the polyribonucleotide nucleotidyltransferase family. As to quaternary structure, component of the RNA degradosome, which is a multiprotein complex involved in RNA processing and mRNA degradation. Mg(2+) is required as a cofactor.

Its subcellular location is the cytoplasm. It carries out the reaction RNA(n+1) + phosphate = RNA(n) + a ribonucleoside 5'-diphosphate. In terms of biological role, involved in mRNA degradation. Catalyzes the phosphorolysis of single-stranded polyribonucleotides processively in the 3'- to 5'-direction. In Shigella dysenteriae serotype 1 (strain Sd197), this protein is Polyribonucleotide nucleotidyltransferase.